Reading from the N-terminus, the 362-residue chain is Glutamate 5-kinase (362 aa).

K3 is a binding site for ATP. Positions 43, 128, and 140 each coordinate substrate. ATP is bound by residues T160 to D161 and T202 to K208. Residues A267–S348 enclose the PUA domain.

Belongs to the glutamate 5-kinase family.

The protein localises to the cytoplasm. The enzyme catalyses L-glutamate + ATP = L-glutamyl 5-phosphate + ADP. It participates in amino-acid biosynthesis; L-proline biosynthesis; L-glutamate 5-semialdehyde from L-glutamate: step 1/2. In terms of biological role, catalyzes the transfer of a phosphate group to glutamate to form L-glutamate 5-phosphate. The chain is Glutamate 5-kinase from Xanthomonas oryzae pv. oryzae (strain MAFF 311018).